Consider the following 403-residue polypeptide: Ribosomal RNA large subunit methyltransferase I (403 aa).

Positions 9–88 (YPRLVLSKGR…EPVDIAFFTR (80 aa)) constitute a PUA domain.

It belongs to the methyltransferase superfamily. RlmI family.

The protein resides in the cytoplasm. The enzyme catalyses cytidine(1962) in 23S rRNA + S-adenosyl-L-methionine = 5-methylcytidine(1962) in 23S rRNA + S-adenosyl-L-homocysteine + H(+). Specifically methylates the cytosine at position 1962 (m5C1962) of 23S rRNA. The chain is Ribosomal RNA large subunit methyltransferase I from Salmonella arizonae (strain ATCC BAA-731 / CDC346-86 / RSK2980).